Consider the following 83-residue polypeptide: MSKDNTIQFDISESKKALTREILTEVYDSLIKKGYNPVNQLVGYLISGDPTYITNYNGARSLVRKLERDEILEEVLKAYLGIK.

Belongs to the UPF0297 family.

This is UPF0297 protein CKR_1221 from Clostridium kluyveri (strain NBRC 12016).